The following is a 59-amino-acid chain: Large ribosomal subunit protein bL32 (59 aa).

Residues Met-1–Asp-59 form a disordered region. The segment covering Arg-49 to Asp-59 has biased composition (basic residues).

The protein belongs to the bacterial ribosomal protein bL32 family.

The sequence is that of Large ribosomal subunit protein bL32 from Ralstonia pickettii (strain 12J).